The chain runs to 870 residues: Rho GTPase-activating protein 7 (870 aa).

The region spanning 18–125 (TVFKSGPLFI…WKTALEQALA (108 aa)) is the PH domain. A Rho-GAP domain is found at 167–367 (LALEDIDGSP…VLLEDYGSIF (201 aa)). Disordered regions lie at residues 378-432 (STES…SGCT) and 446-465 (DSDI…SNIR). Positions 407–417 (NEVEPVTDDDN) are enriched in acidic residues. Residues 569-693 (GEDELAIQRL…HQLNQQRQTH (125 aa)) adopt a coiled-coil conformation. The interval 736-793 (HEENVLGAEWRNSKGAGSFGVGNSRQPSRKQIPESTNTTDSKISEESGKISVDKLSSI) is disordered. Basic and acidic residues predominate over residues 777 to 787 (KISEESGKISV).

Functionally, acts as a GTPase activator for the Rac-type GTPase by converting it to an inactive GDP-bound state. The sequence is that of Rho GTPase-activating protein 7 (ROPGAP7) from Arabidopsis thaliana (Mouse-ear cress).